A 709-amino-acid chain; its full sequence is Bud site selection protein 14 (709 aa).

The residue at position 2 (serine 2) is an N-acetylserine. The segment at 61–258 is disordered; sequence DIINNRPTSG…DYQPLSPPRE (198 aa). 2 stretches are compositionally biased toward polar residues: residues 62–74 and 89–107; these read IINN…SKLT and VTPT…NILS. Composition is skewed to basic and acidic residues over residues 111–123 and 131–150; these read EKGH…RDDD and VEKH…KENS. At tyrosine 159 the chain carries Phosphotyrosine. Phosphoserine is present on residues serine 160 and serine 162. The residue at position 177 (threonine 177) is a Phosphothreonine. Phosphoserine is present on residues serine 212 and serine 222. Over residues 212-226 the composition is skewed to acidic residues; sequence SEDEDEEENYSDDDD. One can recognise an SH3 domain in the interval 259–320; the sequence is LDPDKLYALY…PAEILETFPE (62 aa). The interval 334 to 367 is disordered; that stretch reads SSQSVASSDSKDDSISSGNKNQSDAESIIPTPAL. Serine 376, serine 378, and serine 401 each carry phosphoserine. The span at 396-406 shows a compositional bias: acidic residues; that stretch reads DTSLDSNDDGG. 4 disordered regions span residues 396–421, 464–510, 525–571, and 600–680; these read DTSL…DNDK, NVKK…SDYD, ANGM…SSRA, and ASLG…PASK. Over residues 470–504 the composition is skewed to basic and acidic residues; it reads RQDNKNESEPKTSSSKDREDDYNANRYVGQEKSEP. Serine 507 bears the Phosphoserine mark. Residues 531-552 show a composition bias toward polar residues; sequence SDSQNSLSTIGEFSPSSSEWTN. The span at 553–569 shows a compositional bias: low complexity; the sequence is ESPSTPIVEESSSIPSS. The span at 600 to 614 shows a compositional bias: polar residues; it reads ASLGSSGGMANQTDA. Over residues 615–633 the composition is skewed to basic and acidic residues; the sequence is EQPKEELEKHHSTPEEEKQ. A phosphoserine mark is found at serine 655, serine 658, and serine 670. Residues 655–671 show a composition bias toward low complexity; that stretch reads SSASINSSLSGSRALSN.

In terms of assembly, interacts with GLC7.

In terms of biological role, important for bud site selection. Seems to be a regulatory subunit of the BUD14-GLC7 type-I phosphatase complex. The BUD14-GLC7 complex is necessary to regulate microtubule dynamics at the cortex and may function as a specific activator of the dynein complex. This chain is Bud site selection protein 14 (BUD14), found in Saccharomyces cerevisiae (strain ATCC 204508 / S288c) (Baker's yeast).